Reading from the N-terminus, the 300-residue chain is 7-methylguanosine phosphate-specific 5'-nucleotidase (300 aa).

Catalysis depends on D41, which acts as the Nucleophile. 2 residues coordinate Mg(2+): D41 and D43. D43 serves as the catalytic Proton donor. Residue E88 coordinates CMP. E88 contributes to the N(7)-methyl-GMP binding site. Substrate is bound by residues 156–157 (SA) and K205. D230 contributes to the Mg(2+) binding site. Position 256 is an N6-acetyllysine (K256).

This sequence belongs to the pyrimidine 5'-nucleotidase family. As to quaternary structure, monomer.

The protein resides in the cytoplasm. It catalyses the reaction N(7)-methyl-GMP + H2O = N(7)-methylguanosine + phosphate. The enzyme catalyses CMP + H2O = cytidine + phosphate. It carries out the reaction a ribonucleoside 5'-phosphate + H2O = a ribonucleoside + phosphate. In terms of biological role, specifically hydrolyzes 7-methylguanosine monophosphate (m(7)GMP) to 7-methylguanosine and inorganic phosphate. The specific activity for m(7)GMP may protect cells against undesired salvage of m(7)GMP and its incorporation into nucleic acids. Also has weak activity for CMP. UMP and purine nucleotides are poor substrates. This is 7-methylguanosine phosphate-specific 5'-nucleotidase (Nt5c3b) from Mus musculus (Mouse).